The primary structure comprises 912 residues: Probable dipeptidyl-aminopeptidase B (912 aa).

Over residues 1-25 (MAAEKGESSDEERKPLTRDSMEYRD) the composition is skewed to basic and acidic residues. 2 disordered regions span residues 1 to 31 (MAAE…NSLH) and 49 to 70 (GSTH…SDDG). Over 1–92 (MAAEKGESSD…GGKPVQKKVK (92 aa)) the chain is Cytoplasmic. Residues 93-113 (IVLGFLLFLCLSGWSLSFVLF) form a helical; Signal-anchor for type II membrane protein membrane-spanning segment. The Vacuolar portion of the chain corresponds to 114–912 (LFGGHESSKT…RAAIWVGLSI (799 aa)). N-linked (GlcNAc...) asparagine glycosylation is found at asparagine 130, asparagine 210, asparagine 346, asparagine 569, and asparagine 656. Serine 751 (charge relay system) is an active-site residue. Residue asparagine 810 is glycosylated (N-linked (GlcNAc...) asparagine). Catalysis depends on charge relay system residues aspartate 828 and histidine 861. Asparagine 897 carries an N-linked (GlcNAc...) asparagine glycan.

Belongs to the peptidase S9B family.

It localises to the vacuole membrane. The catalysed reaction is Release of an N-terminal dipeptide, Xaa-Yaa-|-Zaa-, from a polypeptide, preferentially when Yaa is Pro, provided Zaa is neither Pro nor hydroxyproline.. In terms of biological role, type IV dipeptidyl-peptidase which removes N-terminal dipeptides sequentially from polypeptides having unsubstituted N-termini provided that the penultimate residue is proline. The protein is Probable dipeptidyl-aminopeptidase B (DAPB) of Paracoccidioides lutzii (strain ATCC MYA-826 / Pb01) (Paracoccidioides brasiliensis).